The sequence spans 312 residues: Homoserine O-acetyltransferase (312 aa).

Residue Cys-142 is the Acyl-thioester intermediate of the active site. Lys-163 and Ser-192 together coordinate substrate. His-235 (proton acceptor) is an active-site residue. Glu-237 is an active-site residue. Arg-249 contacts substrate.

The protein belongs to the MetA family.

It localises to the cytoplasm. The enzyme catalyses L-homoserine + acetyl-CoA = O-acetyl-L-homoserine + CoA. It functions in the pathway amino-acid biosynthesis; L-methionine biosynthesis via de novo pathway; O-acetyl-L-homoserine from L-homoserine: step 1/1. In terms of biological role, transfers an acetyl group from acetyl-CoA to L-homoserine, forming acetyl-L-homoserine. This chain is Homoserine O-acetyltransferase, found in Chelativorans sp. (strain BNC1).